The primary structure comprises 538 residues: Neutral protease B (538 aa).

A signal peptide spans M1–A28. Residues E29–E223 constitute a propeptide, activation peptide. D365 contributes to the Ca(2+) binding site. H369 contributes to the Zn(2+) binding site. E370 is a catalytic residue. Positions 373 and 393 each coordinate Zn(2+). The Ca(2+) site is built by D404, D406, D407, E409, E412, Y415, T416, I419, and D422. Positions G421–N441 are disordered. H453 (proton donor) is an active-site residue.

This sequence belongs to the peptidase M4 family. Zn(2+) serves as cofactor.

It localises to the secreted. Its activity is regulated as follows. Protease activity can be inhibited in vitro by either a zinc specific chelator, 1,10-phenanthroline, or a metal chelator, EDTA. The enzyme is resistant to phenylmethylsulfonyl fluoride and iodoacetic acid. In terms of biological role, protease able to cleave casein in vitro. This chain is Neutral protease B, found in Bacillus subtilis (strain 168).